Here is a 339-residue protein sequence, read N- to C-terminus: Probable N5-carboxyaminoimidazole ribonucleotide mutase (339 aa).

Residues Ser11, Asp14, and Arg41 each coordinate substrate.

This sequence belongs to the AIR carboxylase family. Class I subfamily.

The catalysed reaction is 5-carboxyamino-1-(5-phospho-D-ribosyl)imidazole + H(+) = 5-amino-1-(5-phospho-D-ribosyl)imidazole-4-carboxylate. It functions in the pathway purine metabolism; IMP biosynthesis via de novo pathway; 5-amino-1-(5-phospho-D-ribosyl)imidazole-4-carboxylate from 5-amino-1-(5-phospho-D-ribosyl)imidazole (N5-CAIR route): step 2/2. Catalyzes the conversion of N5-carboxyaminoimidazole ribonucleotide (N5-CAIR) to 4-carboxy-5-aminoimidazole ribonucleotide (CAIR). This is Probable N5-carboxyaminoimidazole ribonucleotide mutase from Methanobrevibacter smithii.